The primary structure comprises 175 residues: Apoptosis regulator Bcl-2 homolog (175 aa).

Residues 37–42 form a mediates interaction with human NOP53 and localization to host nucleolus region; that stretch reads KLYITG. The chain crosses the membrane as a helical span at residues 153–173; sequence MTALLGSIALLATILAAVAMS.

It belongs to the Bcl-2 family. Interacts with human NOP53; may sequester ORF16 in host nucleolus and reduce its antiapoptotic activity. Interacts with ORF55.

The protein resides in the host membrane. It is found in the host mitochondrion. Its subcellular location is the host nucleus. The protein localises to the host nucleolus. Functionally, plays a role in the protection against apoptosis mediated by cytotoxic cells during the immune response to acute and persistent viral infection. Contributes therefore to latency establishment. Also plays a role in the inhibition of host starvation-induced autophagy which ultimately contributes to the viral chronic infection. Also participates in the viral genome replication within host nucleus. In Homo sapiens (Human), this protein is Apoptosis regulator Bcl-2 homolog (vBCL2).